Here is a 222-residue protein sequence, read N- to C-terminus: Small ribosomal subunit protein uS7m (222 aa).

A mitochondrion-targeting transit peptide spans 1 to 14; it reads MSKKLANFAQKRWI.

Belongs to the universal ribosomal protein uS7 family. As to quaternary structure, component of the mitochondrial ribosome small subunit (28S) which comprises a 12S rRNA and about 30 distinct proteins.

Its subcellular location is the mitochondrion. The chain is Small ribosomal subunit protein uS7m (mrps-7) from Caenorhabditis briggsae.